The sequence spans 283 residues: ATP phosphoribosyltransferase (283 aa).

Belongs to the ATP phosphoribosyltransferase family. Long subfamily. It depends on Mg(2+) as a cofactor.

The protein localises to the cytoplasm. The catalysed reaction is 1-(5-phospho-beta-D-ribosyl)-ATP + diphosphate = 5-phospho-alpha-D-ribose 1-diphosphate + ATP. It participates in amino-acid biosynthesis; L-histidine biosynthesis; L-histidine from 5-phospho-alpha-D-ribose 1-diphosphate: step 1/9. Feedback inhibited by histidine. Its function is as follows. Catalyzes the condensation of ATP and 5-phosphoribose 1-diphosphate to form N'-(5'-phosphoribosyl)-ATP (PR-ATP). Has a crucial role in the pathway because the rate of histidine biosynthesis seems to be controlled primarily by regulation of HisG enzymatic activity. This Bifidobacterium longum subsp. infantis (strain ATCC 15697 / DSM 20088 / JCM 1222 / NCTC 11817 / S12) protein is ATP phosphoribosyltransferase.